Here is a 429-residue protein sequence, read N- to C-terminus: Histidine--tRNA ligase (429 aa).

The protein belongs to the class-II aminoacyl-tRNA synthetase family. In terms of assembly, homodimer.

The protein resides in the cytoplasm. The enzyme catalyses tRNA(His) + L-histidine + ATP = L-histidyl-tRNA(His) + AMP + diphosphate + H(+). The protein is Histidine--tRNA ligase of Pseudomonas aeruginosa (strain UCBPP-PA14).